Here is a 219-residue protein sequence, read N- to C-terminus: Nodulation protein NolA (219 aa).

One can recognise an HTH merR-type domain in the interval 10 to 79; the sequence is RWRIGELAEA…LHEIRKAMEG (70 aa). The segment at residues 13–32 is a DNA-binding region (H-T-H motif); that stretch reads IGELAEATGVTVRTLHHYEH.

In terms of biological role, involved in genotype-specific nodulation of soybeans. The polypeptide is Nodulation protein NolA (nolA) (Bradyrhizobium elkanii).